A 239-amino-acid polypeptide reads, in one-letter code: Serine protease SplD (239 aa).

The first 36 residues, 1 to 36 (MNKNIIIKSIAALTILTSITGVGTTVVDGIQQTAKA), serve as a signal peptide directing secretion. Catalysis depends on charge relay system residues His75, Asp114, and Ser192.

This sequence belongs to the peptidase S1B family.

It is found in the secreted. This is Serine protease SplD (splD) from Staphylococcus aureus (strain COL).